The sequence spans 170 residues: MMGDNEGRRTPLLNLGVQVSMRVLTIGAAMASMWVMITNREVASVYGIAFEAKYSYSSAFRYLVYAQIAVCAATLFTLVWACLAVRRRGLVFALFFFDLLTTLTAISAFSAAFAEGYVGKYGNKQAGWLPICGYVHGYCSRVTISLAMSFASFILLFILTVLTASAARHY.

The Cytoplasmic segment spans residues 1–16; it reads MMGDNEGRRTPLLNLG. Residues 17 to 37 form a helical membrane-spanning segment; that stretch reads VQVSMRVLTIGAAMASMWVMI. Over 38–62 the chain is Extracellular; that stretch reads TNREVASVYGIAFEAKYSYSSAFRY. A helical transmembrane segment spans residues 63-83; that stretch reads LVYAQIAVCAATLFTLVWACL. The Cytoplasmic portion of the chain corresponds to 84 to 88; that stretch reads AVRRR. A helical membrane pass occupies residues 89-109; sequence GLVFALFFFDLLTTLTAISAF. Residues 110 to 141 are Extracellular-facing; that stretch reads SAAFAEGYVGKYGNKQAGWLPICGYVHGYCSR. The chain crosses the membrane as a helical span at residues 142-162; that stretch reads VTISLAMSFASFILLFILTVL. The Cytoplasmic segment spans residues 163–170; that stretch reads TASAARHY.

This sequence belongs to the Casparian strip membrane proteins (CASP) family. In terms of assembly, homodimer and heterodimers. In flowers, expressed in the anther wall.

It localises to the cell membrane. The sequence is that of CASP-like protein 1F1 from Arabidopsis thaliana (Mouse-ear cress).